We begin with the raw amino-acid sequence, 400 residues long: Vitamin K-dependent protein Z (400 aa).

Positions 1–23 are cleaved as a signal peptide; that stretch reads MAGCVPLLQGLVLVLALHRVEPS. A propeptide spanning residues 24-40 is cleaved from the precursor; that stretch reads VFLPASKANDVLVRWKR. A Gla domain is found at 41–86; it reads AGSYLLEELFEGNLEKECYEEICVYEEAREVFENEVVTDEFWRRYK. 13 positions are modified to 4-carboxyglutamate: Glu-47, Glu-48, Glu-51, Glu-55, Glu-57, Glu-60, Glu-61, Glu-66, Glu-67, Glu-70, Glu-73, Glu-75, and Glu-80. A disulfide bond links Cys-58 and Cys-63. 2 consecutive EGF-like domains span residues 87–123 and 125–166; these read GGSPCISQPCLHNGSCQDSIWGYTCTCSPGYEGSNCE and AKNE…KQCV. Intrachain disulfides connect Cys-91-Cys-102, Cys-96-Cys-111, Cys-113-Cys-122, Cys-129-Cys-141, Cys-137-Cys-150, Cys-152-Cys-165, and Cys-203-Cys-219. A glycan (O-linked (Glc...) serine) is linked at Ser-93. A glycan (N-linked (GlcNAc...) asparagine) is linked at Asn-99. Asp-104 carries the (3R)-3-hydroxyaspartate modification. In terms of domain architecture, Peptidase S1 spans 175–400; sequence VLTSEKRAPD…YSLWFKQIMN (226 aa). Residues Asn-225, Asn-233, Asn-306, and Asn-332 are each glycosylated (N-linked (GlcNAc...) asparagine). Residues Cys-327 and Cys-341 are joined by a disulfide bond.

This sequence belongs to the peptidase S1 family. Interacts with SERPINA10. In terms of processing, the iron and 2-oxoglutarate dependent 3-hydroxylation of aspartate and asparagine is (R) stereospecific within EGF domains. In terms of tissue distribution, plasma.

Its subcellular location is the secreted. Functionally, appears to assist hemostasis by binding thrombin and promoting its association with phospholipid vesicles. Inhibits activity of the coagulation protease factor Xa in the presence of SERPINA10, calcium and phospholipids. The polypeptide is Vitamin K-dependent protein Z (PROZ) (Homo sapiens (Human)).